Here is a 330-residue protein sequence, read N- to C-terminus: Probable deoxyhypusine synthase (330 aa).

Positions 1–25 (MTGDDADETHENVVPGSDEDLDTPD) are disordered. The active-site Nucleophile is lysine 298.

The protein belongs to the deoxyhypusine synthase family. NAD(+) serves as cofactor.

It catalyses the reaction [eIF5A protein]-L-lysine + spermidine = [eIF5A protein]-deoxyhypusine + propane-1,3-diamine. Its pathway is protein modification; eIF5A hypusination. Its function is as follows. Catalyzes the NAD-dependent oxidative cleavage of spermidine and the subsequent transfer of the butylamine moiety of spermidine to the epsilon-amino group of a specific lysine residue of the eIF-5A precursor protein to form the intermediate deoxyhypusine residue. The sequence is that of Probable deoxyhypusine synthase from Halobacterium salinarum (strain ATCC 29341 / DSM 671 / R1).